A 296-amino-acid chain; its full sequence is Homoserine kinase (296 aa).

Residue 85–95 (PVARGLGSSAA) coordinates ATP.

The protein belongs to the GHMP kinase family. Homoserine kinase subfamily.

It localises to the cytoplasm. It carries out the reaction L-homoserine + ATP = O-phospho-L-homoserine + ADP + H(+). It functions in the pathway amino-acid biosynthesis; L-threonine biosynthesis; L-threonine from L-aspartate: step 4/5. Functionally, catalyzes the ATP-dependent phosphorylation of L-homoserine to L-homoserine phosphate. The chain is Homoserine kinase from Moorella thermoacetica (strain ATCC 39073 / JCM 9320).